We begin with the raw amino-acid sequence, 232 residues long: Octanoyltransferase (232 aa).

Positions 33–216 (GRAQDTVILL…HLVRALSNGS (184 aa)) constitute a BPL/LPL catalytic domain. Residues 71–78 (RGGRITWH), 146–148 (AIG), and 159–161 (GFA) contribute to the substrate site. Cysteine 177 serves as the catalytic Acyl-thioester intermediate.

It belongs to the LipB family.

Its subcellular location is the cytoplasm. It catalyses the reaction octanoyl-[ACP] + L-lysyl-[protein] = N(6)-octanoyl-L-lysyl-[protein] + holo-[ACP] + H(+). It participates in protein modification; protein lipoylation via endogenous pathway; protein N(6)-(lipoyl)lysine from octanoyl-[acyl-carrier-protein]: step 1/2. In terms of biological role, catalyzes the transfer of endogenously produced octanoic acid from octanoyl-acyl-carrier-protein onto the lipoyl domains of lipoate-dependent enzymes. Lipoyl-ACP can also act as a substrate although octanoyl-ACP is likely to be the physiological substrate. The sequence is that of Octanoyltransferase from Clavibacter sepedonicus (Clavibacter michiganensis subsp. sepedonicus).